The sequence spans 504 residues: Carnosic acid synthase (504 aa).

The helical transmembrane segment at 4–24 (FIILSLAFIAAWVVYSRWSEY) threads the bilayer. C447 lines the heme pocket.

Belongs to the cytochrome P450 family. Heme is required as a cofactor. In terms of tissue distribution, expressed in glandular trichomes of young leaves.

The protein resides in the membrane. It carries out the reaction 11-hydroxyferruginol + 3 reduced [NADPH--hemoprotein reductase] + 3 O2 = carnosate + 3 oxidized [NADPH--hemoprotein reductase] + 4 H2O + 4 H(+). It catalyses the reaction miltiradiene + 2 reduced [NADPH--hemoprotein reductase] + 2 O2 = miltiradien-20-al + 2 oxidized [NADPH--hemoprotein reductase] + 3 H2O + 2 H(+). The enzyme catalyses ferruginol + 3 reduced [NADPH--hemoprotein reductase] + 3 O2 = pisiferate + 3 oxidized [NADPH--hemoprotein reductase] + 4 H2O + 4 H(+). It functions in the pathway secondary metabolite biosynthesis; terpenoid biosynthesis. In terms of biological role, monooxygenase involved in the biosynthesis of carnosate, a potent antioxidant labdane-related diterpene natural products. Catalyzes the oxidation of 11-hydroxyferruginol to produce carnosate. Mediates the conversion of miltiradien into miltiradien-20-al. Also involved in the production of pisiferic acid and derivative products from ferruginol. This is Carnosic acid synthase from Rosmarinus officinalis (Rosemary).